Consider the following 375-residue polypeptide: Cobalt-precorrin-5B C(1)-methyltransferase (375 aa).

This sequence belongs to the CbiD family.

It catalyses the reaction Co-precorrin-5B + S-adenosyl-L-methionine = Co-precorrin-6A + S-adenosyl-L-homocysteine. The protein operates within cofactor biosynthesis; adenosylcobalamin biosynthesis; cob(II)yrinate a,c-diamide from sirohydrochlorin (anaerobic route): step 6/10. In terms of biological role, catalyzes the methylation of C-1 in cobalt-precorrin-5B to form cobalt-precorrin-6A. The protein is Cobalt-precorrin-5B C(1)-methyltransferase of Fusobacterium nucleatum subsp. nucleatum (strain ATCC 25586 / DSM 15643 / BCRC 10681 / CIP 101130 / JCM 8532 / KCTC 2640 / LMG 13131 / VPI 4355).